Reading from the N-terminus, the 208-residue chain is MTHNFLLKASLLYKDICPEQSRFLLQRHQSTAAALPQSIICPFCFEWRKLGNHHVRLRPKRKPTARIRRLLKRESAGKRLSAEQTAVLQKFKRASNAMMATCHTCNKVSRQPGMNRELLVSLSKHKSTPGSASKHRTPQTVNWATPKSVANRTPSSTPRSASSNTSSSSSSKSSSVKSSPFARLKKILMLENKQQGKKGGLKDFLSSL.

Residues 123–137 (SKHKSTPGSASKHRT) show a composition bias toward basic residues. Disordered stretches follow at residues 123–180 (SKHK…KSSP) and 189–208 (MLENKQQGKKGGLKDFLSSL). Positions 138–152 (PQTVNWATPKSVANR) are enriched in polar residues. Positions 153–180 (TPSSTPRSASSNTSSSSSSKSSSVKSSP) are enriched in low complexity.

The protein belongs to the UPF0711 family.

The polypeptide is UPF0711 protein C18orf21 homolog (Danio rerio (Zebrafish)).